Consider the following 165-residue polypeptide: Myosin regulatory light chain 2A, cardiac muscle isoform (165 aa).

Residue Ala2 is modified to N,N,N-trimethylalanine. EF-hand domains follow at residues Ala24–Leu59, Asp94–Arg128, and Phe129–Lys164. Ca(2+) contacts are provided by Asp37, Asn39, Asp41, and Asp48.

Myosin is a hexamer of 2 heavy chains and 4 light chains. Post-translationally, the N-terminus is blocked. N,N,N-trimethylalanine, found in other myosin light chains would not have been detected in the N-terminal tryptic peptide in PubMed:7319048 because it would remain trimethylated and ninhydrin negative after hydrolysis.

In Gallus gallus (Chicken), this protein is Myosin regulatory light chain 2A, cardiac muscle isoform.